A 344-amino-acid polypeptide reads, in one-letter code: Pyruvate dehydrogenase E1 component subunit alpha (344 aa).

8 residues coordinate pyruvate: histidine 55, tyrosine 81, arginine 82, alanine 130, isoleucine 132, aspartate 168, glycine 169, and asparagine 197. Thiamine diphosphate-binding residues include tyrosine 81, arginine 82, alanine 130, isoleucine 132, aspartate 168, glycine 169, asparagine 197, and histidine 266. Aspartate 168 contributes to the Mg(2+) binding site. Residue asparagine 197 coordinates Mg(2+).

Heterodimer of an alpha and a beta chain. Thiamine diphosphate serves as cofactor. Mg(2+) is required as a cofactor.

The protein resides in the plastid. The protein localises to the chloroplast. The catalysed reaction is N(6)-[(R)-lipoyl]-L-lysyl-[protein] + pyruvate + H(+) = N(6)-[(R)-S(8)-acetyldihydrolipoyl]-L-lysyl-[protein] + CO2. In terms of biological role, the pyruvate dehydrogenase complex catalyzes the overall conversion of pyruvate to acetyl-CoA and CO(2). It contains multiple copies of three enzymatic components: pyruvate dehydrogenase (E1), dihydrolipoamide acetyltransferase (E2) and lipoamide dehydrogenase (E3). This chain is Pyruvate dehydrogenase E1 component subunit alpha (pdhA), found in Porphyra purpurea (Red seaweed).